Consider the following 419-residue polypeptide: Equilibrative nucleotide transporter 5 (419 aa).

11 helical membrane passes run Met-20–Val-40, Val-56–Glu-76, Leu-86–Thr-106, Gly-108–Ala-128, Leu-142–Thr-162, Ile-186–Phe-206, Tyr-265–Tyr-285, Gly-292–Gly-312, Lys-327–Ala-347, Trp-354–Leu-374, and Leu-393–Ile-413.

This sequence belongs to the SLC29A/ENT transporter (TC 2.A.57) family.

It is found in the cell membrane. May be involved in nucleoside transport. The protein is Equilibrative nucleotide transporter 5 (ENT5) of Arabidopsis thaliana (Mouse-ear cress).